Reading from the N-terminus, the 345-residue chain is Phosphoribosylformylglycinamidine cyclo-ligase (345 aa).

It belongs to the AIR synthase family.

It localises to the cytoplasm. The catalysed reaction is 2-formamido-N(1)-(5-O-phospho-beta-D-ribosyl)acetamidine + ATP = 5-amino-1-(5-phospho-beta-D-ribosyl)imidazole + ADP + phosphate + H(+). It functions in the pathway purine metabolism; IMP biosynthesis via de novo pathway; 5-amino-1-(5-phospho-D-ribosyl)imidazole from N(2)-formyl-N(1)-(5-phospho-D-ribosyl)glycinamide: step 2/2. The polypeptide is Phosphoribosylformylglycinamidine cyclo-ligase (Actinobacillus succinogenes (strain ATCC 55618 / DSM 22257 / CCUG 43843 / 130Z)).